The sequence spans 207 residues: Ubiquitin-conjugating enzyme E2 E3 (207 aa).

The segment covering 1–10 (MSSDRQRSDD) has biased composition (basic and acidic residues). Residues 1–63 (MSSDRQRSDD…KTTAKLSTSA (63 aa)) are disordered. An N-acetylserine modification is found at S2. Position 8 is a phosphoserine (S8). Residues 50-63 (KLSSKTTAKLSTSA) are compositionally biased toward low complexity. Residues 61–207 (TSAKRIQKEL…ARQWTKRYAT (147 aa)) form the UBC core domain. C145 (glycyl thioester intermediate) is an active-site residue.

Belongs to the ubiquitin-conjugating enzyme family. In terms of assembly, the ubiquitin-loaded form interacts specifically with importin-11 (IPO11), leading to its import into the nucleus. Interacts with NEDD4L.

It is found in the nucleus. Its subcellular location is the cytoplasm. The enzyme catalyses S-ubiquitinyl-[E1 ubiquitin-activating enzyme]-L-cysteine + [E2 ubiquitin-conjugating enzyme]-L-cysteine = [E1 ubiquitin-activating enzyme]-L-cysteine + S-ubiquitinyl-[E2 ubiquitin-conjugating enzyme]-L-cysteine.. It functions in the pathway protein modification; protein ubiquitination. Its function is as follows. Accepts ubiquitin from the E1 complex and catalyzes its covalent attachment to other proteins. In vitro catalyzes 'Lys-11'- and 'Lys-48'-, as well as 'Lys-63'-linked polyubiquitination. Participates in the regulation of transepithelial sodium transport in renal cells. The polypeptide is Ubiquitin-conjugating enzyme E2 E3 (UBE2E3) (Bos taurus (Bovine)).